A 460-amino-acid chain; its full sequence is Bifunctional protein GlmU (460 aa).

The interval 1–229 (MKNYAIILAA…FDESLGVNDR (229 aa)) is pyrophosphorylase. Residues 8–11 (LAAG), lysine 22, glutamine 72, and 77–78 (GT) contribute to the UDP-N-acetyl-alpha-D-glucosamine site. Aspartate 102 contacts Mg(2+). Residues glycine 139, glutamate 154, asparagine 169, and asparagine 227 each coordinate UDP-N-acetyl-alpha-D-glucosamine. Asparagine 227 contacts Mg(2+). A linker region spans residues 230 to 250 (LALAQAEVIMQERINKQHMLN). Residues 251–460 (GVTLQNPAAT…RLPHHPDQPQ (210 aa)) are N-acetyltransferase. UDP-N-acetyl-alpha-D-glucosamine-binding residues include arginine 332 and lysine 350. Residue histidine 362 is the Proton acceptor of the active site. 2 residues coordinate UDP-N-acetyl-alpha-D-glucosamine: tyrosine 365 and asparagine 376. Acetyl-CoA-binding positions include alanine 379, 385 to 386 (NY), serine 404, alanine 422, and arginine 439.

In the N-terminal section; belongs to the N-acetylglucosamine-1-phosphate uridyltransferase family. It in the C-terminal section; belongs to the transferase hexapeptide repeat family. In terms of assembly, homotrimer. Mg(2+) serves as cofactor.

It localises to the cytoplasm. It catalyses the reaction alpha-D-glucosamine 1-phosphate + acetyl-CoA = N-acetyl-alpha-D-glucosamine 1-phosphate + CoA + H(+). The catalysed reaction is N-acetyl-alpha-D-glucosamine 1-phosphate + UTP + H(+) = UDP-N-acetyl-alpha-D-glucosamine + diphosphate. It participates in nucleotide-sugar biosynthesis; UDP-N-acetyl-alpha-D-glucosamine biosynthesis; N-acetyl-alpha-D-glucosamine 1-phosphate from alpha-D-glucosamine 6-phosphate (route II): step 2/2. The protein operates within nucleotide-sugar biosynthesis; UDP-N-acetyl-alpha-D-glucosamine biosynthesis; UDP-N-acetyl-alpha-D-glucosamine from N-acetyl-alpha-D-glucosamine 1-phosphate: step 1/1. It functions in the pathway bacterial outer membrane biogenesis; LPS lipid A biosynthesis. In terms of biological role, catalyzes the last two sequential reactions in the de novo biosynthetic pathway for UDP-N-acetylglucosamine (UDP-GlcNAc). The C-terminal domain catalyzes the transfer of acetyl group from acetyl coenzyme A to glucosamine-1-phosphate (GlcN-1-P) to produce N-acetylglucosamine-1-phosphate (GlcNAc-1-P), which is converted into UDP-GlcNAc by the transfer of uridine 5-monophosphate (from uridine 5-triphosphate), a reaction catalyzed by the N-terminal domain. This Streptococcus equi subsp. zooepidemicus (strain ATCC 35246 / C74-63) protein is Bifunctional protein GlmU.